We begin with the raw amino-acid sequence, 286 residues long: Inositol polyphosphate multikinase alpha (286 aa).

A disordered region spans residues 1-22; the sequence is MQLKVPEHQVAGHIAKDGKPGP.

Belongs to the inositol phosphokinase (IPK) family. Phosphorylated. As to expression, detected in leaves, stems, roots, siliques and flowers. Highly expressed in root tissues, anthers, the stigma, pollen grains and growing pollen tubes.

Its subcellular location is the nucleus. It is found in the cell membrane. It catalyses the reaction 1D-myo-inositol 1,4,5-trisphosphate + 2 ATP = 1D-myo-inositol 1,3,4,5,6-pentakisphosphate + 2 ADP + 2 H(+). It carries out the reaction 1D-myo-inositol 1,3,4,6-tetrakisphosphate + ATP = 1D-myo-inositol 1,3,4,5,6-pentakisphosphate + ADP + H(+). Functionally, inositol phosphate kinase with a broad substrate specificity. Phosphorylates inositol 1,4,5-trisphosphate (Ins(1,4,5)P3), inositol 1,4,5,6-tetrakisphosphate (Ins(1,4,5,6)P4), inositol 1,3,4,5-tetrakisphosphate (Ins(1,3,4,5)P4), inositol 1,3,4,6-tetrakisphosphate (Ins(1,3,4,6)P4) and inositol 1,2,3,4,6-pentakisphosphate (Ins(1,2,3,4,6)P5) but not inositol 1,4-bisphosphate (Ins(1,4)P2), inositol 1,3,4-trisphosphate (Ins(1,3,4)P3), inositol 1,2,6-trisphosphate (Ins(1,2,6)P3), inositol 3,4,5,6-tetrakisphosphate (Ins(3,4,5,6)P4), inositol 1,3,4,5,6-pentakisphosphate (Ins(1,3,4,5,6)P5), inositol 1,2,4,5,6-pentakisphosphate (Ins(1,2,4,5,6)P5) or inositol hexakisphosphate (InsP6). Regulates pollen and root development probably through the regulation of InsP3-mediated calcium accumulation. This chain is Inositol polyphosphate multikinase alpha (IPK2a), found in Arabidopsis thaliana (Mouse-ear cress).